A 198-amino-acid chain; its full sequence is Peptidyl-tRNA hydrolase (198 aa).

Tyrosine 17 provides a ligand contact to tRNA. Histidine 22 serves as the catalytic Proton acceptor. The tRNA site is built by tyrosine 74, asparagine 76, and asparagine 122.

This sequence belongs to the PTH family. In terms of assembly, monomer.

The protein resides in the cytoplasm. It catalyses the reaction an N-acyl-L-alpha-aminoacyl-tRNA + H2O = an N-acyl-L-amino acid + a tRNA + H(+). In terms of biological role, hydrolyzes ribosome-free peptidyl-tRNAs (with 1 or more amino acids incorporated), which drop off the ribosome during protein synthesis, or as a result of ribosome stalling. Catalyzes the release of premature peptidyl moieties from peptidyl-tRNA molecules trapped in stalled 50S ribosomal subunits, and thus maintains levels of free tRNAs and 50S ribosomes. This chain is Peptidyl-tRNA hydrolase, found in Kineococcus radiotolerans (strain ATCC BAA-149 / DSM 14245 / SRS30216).